Consider the following 219-residue polypeptide: Thiamine-phosphate synthase (219 aa).

4-amino-2-methyl-5-(diphosphooxymethyl)pyrimidine-binding positions include 48–52 and Asn-84; that span reads QFRQK. 2 residues coordinate Mg(2+): Asp-85 and Asp-104. Residue Ser-123 participates in 4-amino-2-methyl-5-(diphosphooxymethyl)pyrimidine binding. 150-152 is a 2-[(2R,5Z)-2-carboxy-4-methylthiazol-5(2H)-ylidene]ethyl phosphate binding site; sequence TPS. Lys-153 lines the 4-amino-2-methyl-5-(diphosphooxymethyl)pyrimidine pocket. Residues Gly-181 and 199–200 contribute to the 2-[(2R,5Z)-2-carboxy-4-methylthiazol-5(2H)-ylidene]ethyl phosphate site; that span reads IS.

It belongs to the thiamine-phosphate synthase family. The cofactor is Mg(2+).

It carries out the reaction 2-[(2R,5Z)-2-carboxy-4-methylthiazol-5(2H)-ylidene]ethyl phosphate + 4-amino-2-methyl-5-(diphosphooxymethyl)pyrimidine + 2 H(+) = thiamine phosphate + CO2 + diphosphate. It catalyses the reaction 2-(2-carboxy-4-methylthiazol-5-yl)ethyl phosphate + 4-amino-2-methyl-5-(diphosphooxymethyl)pyrimidine + 2 H(+) = thiamine phosphate + CO2 + diphosphate. The catalysed reaction is 4-methyl-5-(2-phosphooxyethyl)-thiazole + 4-amino-2-methyl-5-(diphosphooxymethyl)pyrimidine + H(+) = thiamine phosphate + diphosphate. It participates in cofactor biosynthesis; thiamine diphosphate biosynthesis; thiamine phosphate from 4-amino-2-methyl-5-diphosphomethylpyrimidine and 4-methyl-5-(2-phosphoethyl)-thiazole: step 1/1. Functionally, condenses 4-methyl-5-(beta-hydroxyethyl)thiazole monophosphate (THZ-P) and 2-methyl-4-amino-5-hydroxymethyl pyrimidine pyrophosphate (HMP-PP) to form thiamine monophosphate (TMP). This Helicobacter pylori (strain ATCC 700392 / 26695) (Campylobacter pylori) protein is Thiamine-phosphate synthase.